The primary structure comprises 239 residues: MAVVTLSEMMEAGAHFGHQTRRWNPKMSRYIYCARNGVHIIDLVQTAICMNNAYKWTRSSARSGKRFLFVGTKKQASEVVALEATRCGASYVNQRWLGGMLTNWTTMKARIDRLKDLERMESSGAIAMRPKKEASVLRRELERLQKYLGGLKGMRRLPDVVVLVDQRRETNAVLEARKLDIPLVSMLDTNCDPDLCEVPIPCNDDAVRSVQLVLGRLADAINEGRHGTNDQRGADDSDD.

Belongs to the universal ribosomal protein uS2 family.

This Prochlorococcus marinus (strain MIT 9313) protein is Small ribosomal subunit protein uS2.